We begin with the raw amino-acid sequence, 183 residues long: NADH-quinone oxidoreductase subunit B 2 (183 aa).

C47, C48, C113, and C142 together coordinate [4Fe-4S] cluster.

Belongs to the complex I 20 kDa subunit family. In terms of assembly, NDH-1 is composed of 14 different subunits. Subunits NuoB, C, D, E, F, and G constitute the peripheral sector of the complex. Requires [4Fe-4S] cluster as cofactor.

The protein resides in the cell inner membrane. The catalysed reaction is a quinone + NADH + 5 H(+)(in) = a quinol + NAD(+) + 4 H(+)(out). In terms of biological role, NDH-1 shuttles electrons from NADH, via FMN and iron-sulfur (Fe-S) centers, to quinones in the respiratory chain. The immediate electron acceptor for the enzyme in this species is believed to be ubiquinone. Couples the redox reaction to proton translocation (for every two electrons transferred, four hydrogen ions are translocated across the cytoplasmic membrane), and thus conserves the redox energy in a proton gradient. This chain is NADH-quinone oxidoreductase subunit B 2, found in Anaeromyxobacter sp. (strain Fw109-5).